A 133-amino-acid polypeptide reads, in one-letter code: MSWQAYVDEHLMCDIEGTGQHLTSAAILGLDGTVWAQSAKFPQFKPEEMKGIIKEFDEAGTLAPTGMFIAGAKYMVLQGEPGAVIRGKKGAGGICIKKTGQAMIMGIYDEPVAPGQCNMVVERLGDYLLEQGM.

The protein belongs to the profilin family. In terms of assembly, occurs in many kinds of cells as a complex with monomeric actin in a 1:1 ratio.

It localises to the cytoplasm. The protein resides in the cytoskeleton. Its function is as follows. Binds to actin and affects the structure of the cytoskeleton. At high concentrations, profilin prevents the polymerization of actin, whereas it enhances it at low concentrations. By binding to PIP2, it inhibits the formation of IP3 and DG. The polypeptide is Profilin (Helianthus annuus (Common sunflower)).